The following is a 219-amino-acid chain: ATP phosphoribosyltransferase (219 aa).

Belongs to the ATP phosphoribosyltransferase family. Short subfamily. As to quaternary structure, heteromultimer composed of HisG and HisZ subunits.

Its subcellular location is the cytoplasm. The catalysed reaction is 1-(5-phospho-beta-D-ribosyl)-ATP + diphosphate = 5-phospho-alpha-D-ribose 1-diphosphate + ATP. It participates in amino-acid biosynthesis; L-histidine biosynthesis; L-histidine from 5-phospho-alpha-D-ribose 1-diphosphate: step 1/9. Its function is as follows. Catalyzes the condensation of ATP and 5-phosphoribose 1-diphosphate to form N'-(5'-phosphoribosyl)-ATP (PR-ATP). Has a crucial role in the pathway because the rate of histidine biosynthesis seems to be controlled primarily by regulation of HisG enzymatic activity. The chain is ATP phosphoribosyltransferase from Syntrophotalea carbinolica (strain DSM 2380 / NBRC 103641 / GraBd1) (Pelobacter carbinolicus).